The chain runs to 1978 residues: Sodium channel protein type 8 subunit alpha (1978 aa).

2 disordered regions span residues 1–20 (MAARVLAPPGPDSFKPFTPE) and 28–62 (RIAESKLKKPPKADGSHREDDEDSKPKPNSDLEAG). At 1–132 (MAARVLAPPG…RIAIKILIHS (132 aa)) the chain is on the cytoplasmic side. Residues 28–61 (RIAESKLKKPPKADGSHREDDEDSKPKPNSDLEA) are compositionally biased toward basic and acidic residues. The I repeat unit spans residues 114–442 (ILSPFNLIRR…KAMLEQLKKQ (329 aa)). Residues 133-151 (VFSMIIMCTILTNCVFMTF) traverse the membrane as a helical segment. Topologically, residues 152-158 (SNPPEWS) are extracellular. A helical membrane pass occupies residues 159–179 (KNVEYTFTGIYTFESLVKIIA). The Cytoplasmic portion of the chain corresponds to 180-193 (RGFCIDGFTFLRDP). The helical transmembrane segment at 194-211 (WNWLDFSVIMMAYVTEFV) threads the bilayer. At 212 to 217 (DLGNVS) the chain is on the extracellular side. The N-linked (GlcNAc...) asparagine glycan is linked to N215. A helical transmembrane segment spans residues 218–234 (ALRTFRVLRALKTISVI). Over 235 to 253 (PGLKTIVGALIQSVKKLSD) the chain is Cytoplasmic. The chain crosses the membrane as a helical span at residues 254 to 273 (VMILTVFCLSVFALIGLQLF). At 274-355 (MGNLRNKCVV…PNYGYTSFDT (82 aa)) the chain is on the extracellular side. A disulfide bridge connects residues C281 and C333. 4 N-linked (GlcNAc...) asparagine glycosylation sites follow: N289, N295, N308, and N326. Positions 356-380 (FSWAFLALFRLMTQDYWENLYQLTL) form an intramembrane region, pore-forming. Residue E373 participates in Na(+) binding. The Extracellular portion of the chain corresponds to 381 to 387 (RAAGKTY). The helical transmembrane segment at 388–408 (MIFFVLVIFVGSFYLVNLILA) threads the bilayer. The Cytoplasmic segment spans residues 409 to 751 (VVAMAYEEQN…EIVNLIVMDP (343 aa)). Disordered regions lie at residues 446–530 (AQAA…KAFR) and 576–597 (DPGSENEFADDEHSTVEESEGR). Over residues 473 to 486 (SPRSSSELSKLSSK) the composition is skewed to low complexity. Basic residues predominate over residues 489-500 (KERRNRRKKRKQ). 2 stretches are compositionally biased toward basic and acidic residues: residues 501–530 (KELSEGEEKGDPEKVFKSESEDGMRRKAFR) and 586–597 (DEHSTVEESEGR). Phosphoserine is present on residues S518 and S520. One copy of the II repeat lies at 733–1005 (CHPYWIKLKE…QISVIRIKKG (273 aa)). A helical membrane pass occupies residues 752–770 (FVDLAITICIVLNTLFMAM). Residues 771 to 781 (EHHPMTPQFEH) lie on the Extracellular side of the membrane. Residues 782–801 (VLAVGNLVFTGIFTAEMFLK) form a helical membrane-spanning segment. The Cytoplasmic segment spans residues 802 to 815 (LIAMDPYYYFQEGW). The chain crosses the membrane as a helical span at residues 816–835 (NIFDGFIVSLSLMELGLADV). The Extracellular segment spans residues 836 to 837 (EG). Residues 838 to 855 (LSVLRSFRLLRVFKLAKS) form a helical membrane-spanning segment. The Cytoplasmic portion of the chain corresponds to 856-871 (WPTLNMLIKIIGNSVG). The chain crosses the membrane as a helical span at residues 872–890 (ALGNLTLVLAIIVFIFAVV). Residues 891 to 919 (GMQLFGKSYKECVCKISQECKLPRWHMND) are Extracellular-facing. An intrachain disulfide couples C904 to C910. The segment at residues 920–940 (FFHSFLIVFRVLCGEWIETMW) is an intramembrane region (pore-forming). Na(+) contacts are provided by E934 and E937. Residues 941–953 (DCMEVAGQAMCLI) are Extracellular-facing. The cysteines at positions 942 and 951 are disulfide-linked. Residues 954–974 (VFMMVMVIGNLVVLNLFLALL) form a helical membrane-spanning segment. Topologically, residues 975–1197 (LSSFSADNLA…TCFLIVEHNW (223 aa)) are cytoplasmic. Residues 1105 to 1146 (NLNTEDVSSESDPEGSKDKLDDTSSSEGSTIDIKPEVEEVPV) are disordered. Residues 1178-1493 (LGKSWWILRK…KKYYNAMKKL (316 aa)) form an III repeat. Residues 1198 to 1215 (FETFIIFMILLSSGALAF) traverse the membrane as a helical segment. The Extracellular segment spans residues 1216-1228 (EDIYIEQRKTIRT). The chain crosses the membrane as a helical span at residues 1229 to 1247 (ILEYADKVFTYIFILEMLL). The Cytoplasmic segment spans residues 1248–1261 (KWTAYGFVKFFTNA). The helical transmembrane segment at 1262 to 1280 (WCWLDFLIVAVSLVSLIAN) threads the bilayer. Residues 1281–1288 (ALGYSELG) are Extracellular-facing. The chain crosses the membrane as a helical span at residues 1289-1307 (AIKSLRTLRALRPLRALSR). The Cytoplasmic segment spans residues 1308–1324 (FEGMRVVVNALVGAIPS). A helical membrane pass occupies residues 1325-1344 (IMNVLLVCLIFWLIFSIMGV). Residues 1345–1397 (NLFAGKYHYCFNETSEIRFEIDEVNNKTDCEKLMEGNNTEIRWKNVKINFDNV) lie on the Extracellular side of the membrane. Residues C1354 and C1374 are joined by a disulfide bond. 3 N-linked (GlcNAc...) asparagine glycosylation sites follow: N1356, N1370, and N1381. The pore-forming intramembrane region spans 1398–1419 (GAGYLALLQVATFKGWMDIMYA). Topologically, residues 1420 to 1436 (AVDSRKPDEQPDYEGNI) are extracellular. Residues 1437–1458 (YMYIYFVIFIIFGSFFTLNLFI) form a helical membrane-spanning segment. The Cytoplasmic portion of the chain corresponds to 1459–1521 (GVIIDNFNQQ…IVFDFVTQQA (63 aa)). Residue S1495 is modified to Phosphoserine; by PKC. The IV repeat unit spans residues 1502–1799 (IPRPLNKIQG…WEKFDPDATQ (298 aa)). A helical membrane pass occupies residues 1522–1539 (FDIVIMMLICLNMVTMMV). The Extracellular segment spans residues 1540–1550 (ETDTQSKQMEN). A helical membrane pass occupies residues 1551-1569 (ILYWINLVFVIFFTCECVL). The Cytoplasmic segment spans residues 1570–1581 (KMFALRHYYFTI). A helical transmembrane segment spans residues 1582–1599 (GWNIFDFVVVILSIVGMF). The Extracellular segment spans residues 1600 to 1612 (LADIIEKYFVSPT). The chain crosses the membrane as a helical span at residues 1613–1629 (LFRVIRLARIGRILRLI). The Cytoplasmic portion of the chain corresponds to 1630–1648 (KGAKGIRTLLFALMMSLPA). The helical transmembrane segment at 1649–1666 (LFNIGLLLFLVMFIFSIF) threads the bilayer. The Extracellular segment spans residues 1667-1688 (GMSNFAYVKHEAGIDDMFNFET). An intramembrane region (pore-forming) is located at residues 1689–1711 (FGNSMICLFQITTSAGWDGLLLP). Topologically, residues 1712-1740 (ILNRPPDCSLDKEHPGSGFKGDCGNPSVG) are extracellular. A disulfide bridge links C1719 with C1734. The chain crosses the membrane as a helical span at residues 1741 to 1763 (IFFFVSYIIISFLIVVNMYIAII). Over 1764–1978 (LENFSVATEE…RQKEVRESKC (215 aa)) the chain is Cytoplasmic. Positions 1893 to 1922 (EEVSAVVLQRAYRGHLARRGFICRKITSNK) constitute an IQ domain. The segment at 1924–1978 (ENGGTHREKKESTPSTASLPSYDSVTKPDKEKQQRAEEGRRERAKRQKEVRESKC) is disordered. Residues 1936–1947 (TPSTASLPSYDS) are compositionally biased toward polar residues. Basic and acidic residues predominate over residues 1949-1978 (TKPDKEKQQRAEEGRRERAKRQKEVRESKC).

This sequence belongs to the sodium channel (TC 1.A.1.10) family. Nav1.6/SCN8A subfamily. The voltage-sensitive sodium channel consists of an ion-conducting pore-forming alpha subunit regulated by one or more beta-1 (SCN1B), beta-2 (SCN2B), beta-3 (SCN3B) and/or beta-4 (SCN4B) subunits. Beta-1 (SCN1B) and beta-3 (SCN3B) are non-covalently associated with alpha, while beta-2 (SCN2B) and beta-4 (SCN4B) are covalently linked by disulfide bonds. Interacts with FGF13. Interacts with NEDD4 and NEDD4L. Interacts with FGF14, GBG3, GBB2 and SCN1B. Interacts with TMEM233. Interacts with the conotoxin GVIIJ. Interacts with the scorpion toxin BMK M1. Interacts with CALM1; the interaction modulates the inactivation rate of SCN8A. May be ubiquitinated by NEDD4L; which would promote its endocytosis. Post-translationally, phosphorylation at Ser-1495 by PKC in a highly conserved cytoplasmic loop slows inactivation of the sodium channel and reduces peak sodium currents. As to expression, expressed in the hippocampus (at protein level). Expressed in brain, cerebellum and spinal cord. In terms of tissue distribution, expressed in non-neuronal tissues, such as monocytes/macrophages.

The protein localises to the cell membrane. It is found in the cell projection. The protein resides in the axon. Its subcellular location is the cytoplasmic vesicle. It localises to the podosome. The enzyme catalyses Na(+)(in) = Na(+)(out). Pore-forming subunit of a voltage-gated sodium channel complex assuming opened or closed conformations in response to the voltage difference across membranes and through which sodium ions selectively pass along their electrochemical gradient. Contributes to neuronal excitability by regulating action potential threshold and propagation. Functionally, more specifically expressed in non-neuronal cells, could play a role in sodium release from intracellular compartments and participate in the control of podosomes formation and macrophages adhesion and movement. In Mus musculus (Mouse), this protein is Sodium channel protein type 8 subunit alpha.